The sequence spans 199 residues: V-type proton ATPase subunit E (199 aa).

This sequence belongs to the V-ATPase E subunit family.

Its function is as follows. Produces ATP from ADP in the presence of a proton gradient across the membrane. This chain is V-type proton ATPase subunit E, found in Clostridium botulinum (strain Loch Maree / Type A3).